Here is a 688-residue protein sequence, read N- to C-terminus: GTPase IMAP family member 8 (688 aa).

Over residues 1–14 the composition is skewed to low complexity; that stretch reads MATSSHQGAAAGSQ. The interval 1–42 is disordered; the sequence is MATSSHQGAAAGSQAEHRSCEASVGQGERPSASQGQEGNFKQ. The segment covering 31 to 42 has biased composition (polar residues); the sequence is SASQGQEGNFKQ. AIG1-type G domains lie at 46 to 247, 282 to 472, and 473 to 677; these read TSTL…MESS, MPEL…VIRE, and KELL…GQLK. The tract at residues 55–62 is G1; sequence GKQGAGKS. Residues 55–63 and Ser-76 contribute to the GTP site; that span reads GKQGAGKSA. Residues 82 to 86 form a G2 region; it reads MVTDR. The segment at 103–106 is G3; that stretch reads DTPD. The interval 172–175 is G4; the sequence is TRED. GTP contacts are provided by residues 173 to 175 and Asn-209; that span reads RED. Positions 208–210 are G5; sequence NNK.

It belongs to the TRAFAC class TrmE-Era-EngA-EngB-Septin-like GTPase superfamily. AIG1/Toc34/Toc159-like paraseptin GTPase family. IAN subfamily. Abundantly expressed in the thymus (in thymocytes), spleen (in splenocytes), lymph node, followed by bone marrow and lung.

It localises to the endoplasmic reticulum. Its subcellular location is the golgi apparatus. The protein resides in the mitochondrion. The protein localises to the cytoplasm. It is found in the cytosol. Exerts an anti-apoptotic effect in the immune system and is involved in responses to infections. This chain is GTPase IMAP family member 8 (Gimap8), found in Mus musculus (Mouse).